A 245-amino-acid chain; its full sequence is Demethylmenaquinone methyltransferase (245 aa).

Residues Thr-70, Asp-90, and 118 to 119 contribute to the S-adenosyl-L-methionine site; that span reads DC.

The protein belongs to the class I-like SAM-binding methyltransferase superfamily. MenG/UbiE family.

The enzyme catalyses a 2-demethylmenaquinol + S-adenosyl-L-methionine = a menaquinol + S-adenosyl-L-homocysteine + H(+). Its pathway is quinol/quinone metabolism; menaquinone biosynthesis; menaquinol from 1,4-dihydroxy-2-naphthoate: step 2/2. In terms of biological role, methyltransferase required for the conversion of demethylmenaquinol (DMKH2) to menaquinol (MKH2). This chain is Demethylmenaquinone methyltransferase, found in Bacteroides fragilis (strain ATCC 25285 / DSM 2151 / CCUG 4856 / JCM 11019 / LMG 10263 / NCTC 9343 / Onslow / VPI 2553 / EN-2).